The following is a 327-amino-acid chain: Cytochrome f (327 aa).

An N-terminal signal peptide occupies residues 1–24 (MKRIGLVFCALLLLLGMGARPAAA). The heme site is built by tyrosine 25, cysteine 45, cysteine 48, and histidine 49. Residues 293–313 (VKWLVAFLAAITITQVLLVLK) form a helical membrane-spanning segment.

Belongs to the cytochrome f family. In terms of assembly, the 4 large subunits of the cytochrome b6-f complex are cytochrome b6, subunit IV (17 kDa polypeptide, PetD), cytochrome f and the Rieske protein, while the 4 small subunits are PetG, PetL, PetM and PetN. The complex functions as a dimer. Heme serves as cofactor.

It is found in the cellular thylakoid membrane. Functionally, component of the cytochrome b6-f complex, which mediates electron transfer between photosystem II (PSII) and photosystem I (PSI), cyclic electron flow around PSI, and state transitions. The polypeptide is Cytochrome f (Synechococcus sp. (strain JA-2-3B'a(2-13)) (Cyanobacteria bacterium Yellowstone B-Prime)).